The chain runs to 366 residues: Protein disulfide isomerase-like 2-1 (366 aa).

An N-terminal signal peptide occupies residues Met-1–Ala-29. 2 consecutive Thioredoxin domains span residues Asp-30 to Ala-138 and Thr-139 to Gly-257. Residues Cys-59, Cys-62, Cys-178, and Cys-181 each act as nucleophile in the active site. 2 disulfides stabilise this stretch: Cys-59-Cys-62 and Cys-178-Cys-181.

It belongs to the protein disulfide isomerase family.

The protein localises to the secreted. It catalyses the reaction Catalyzes the rearrangement of -S-S- bonds in proteins.. In terms of biological role, acts as a protein-folding catalyst that interacts with nascent polypeptides to catalyze the formation, isomerization, and reduction or oxidation of disulfide bonds. May play a role in storage protein biogenesis. The sequence is that of Protein disulfide isomerase-like 2-1 (PDIL2-1) from Oryza sativa subsp. japonica (Rice).